Here is a 406-residue protein sequence, read N- to C-terminus: Argininosuccinate synthase (406 aa).

8-16 provides a ligand contact to ATP; sequence AYSGGLDTS. Y86 serves as a coordination point for L-citrulline. G116 serves as a coordination point for ATP. 3 residues coordinate L-aspartate: T118, N122, and D123. N122 lines the L-citrulline pocket. L-citrulline is bound by residues R126, S174, E259, and Y271.

This sequence belongs to the argininosuccinate synthase family. Type 1 subfamily. As to quaternary structure, homotetramer.

It is found in the cytoplasm. It carries out the reaction L-citrulline + L-aspartate + ATP = 2-(N(omega)-L-arginino)succinate + AMP + diphosphate + H(+). It functions in the pathway amino-acid biosynthesis; L-arginine biosynthesis; L-arginine from L-ornithine and carbamoyl phosphate: step 2/3. This is Argininosuccinate synthase from Lacticaseibacillus paracasei (strain ATCC 334 / BCRC 17002 / CCUG 31169 / CIP 107868 / KCTC 3260 / NRRL B-441) (Lactobacillus paracasei).